Here is a 426-residue protein sequence, read N- to C-terminus: MSKSENLYSAARELIPGGVNSPVRAFTGVGGTPLFIEKADGAYLYDVDGKAYIDYVGSWGPMVLGHNHPAIRNAVIEAAERGLSFGAPTEMEVKMAELVTNLVPTMDMVRMVNSGTEATMSAIRLARGFTGRDKIIKFEGCYHGHADCLLVKAGSGALTLGQPNSPGVPADFAKHTLTCTYNDLTSVRAAFEQYPQEIACIIVEPVAGNMNCVPPLPEFLPGLRALCDEFGALLIIDEVMTGFRVALAGAQDYYGVVPDLTCLGKIIGGGMPVGAFGGRRDVMDALAPTGPVYQAGTLSGNPIAMAAGFACLNEVAQPGIHETLDELTTRLAEGLCEAAQEAGIPLVVNHVGGMFGIFFTDAETVTCYQDVMACDVERFKRFFHLMLEEGVYLAPSAFEAGFMSVAHSEEDINNTIDAARRVFAKL.

N6-(pyridoxal phosphate)lysine is present on K265.

It belongs to the class-III pyridoxal-phosphate-dependent aminotransferase family. HemL subfamily. As to quaternary structure, homodimer. Pyridoxal 5'-phosphate serves as cofactor.

It localises to the cytoplasm. The catalysed reaction is (S)-4-amino-5-oxopentanoate = 5-aminolevulinate. It functions in the pathway porphyrin-containing compound metabolism; protoporphyrin-IX biosynthesis; 5-aminolevulinate from L-glutamyl-tRNA(Glu): step 2/2. The protein is Glutamate-1-semialdehyde 2,1-aminomutase of Salmonella paratyphi A (strain ATCC 9150 / SARB42).